The sequence spans 410 residues: Acetate kinase (410 aa).

Residue Asn-7 participates in Mg(2+) binding. Lys-14 serves as a coordination point for ATP. Arg-88 lines the substrate pocket. Asp-145 functions as the Proton donor/acceptor in the catalytic mechanism. Residues 203 to 207 (HAGNG), 278 to 280 (DTR), and 326 to 330 (GIGEN) each bind ATP. Glu-379 is a Mg(2+) binding site.

The protein belongs to the acetokinase family. As to quaternary structure, homodimer. The cofactor is Mg(2+). Mn(2+) is required as a cofactor.

It is found in the cytoplasm. It catalyses the reaction acetate + ATP = acetyl phosphate + ADP. It participates in metabolic intermediate biosynthesis; acetyl-CoA biosynthesis; acetyl-CoA from acetate: step 1/2. Its function is as follows. Catalyzes the formation of acetyl phosphate from acetate and ATP. Can also catalyze the reverse reaction. The chain is Acetate kinase from Aster yellows witches'-broom phytoplasma (strain AYWB).